Reading from the N-terminus, the 204-residue chain is ATP-dependent Clp protease proteolytic subunit (204 aa).

Residue S101 is the Nucleophile of the active site. The active site involves H126.

It belongs to the peptidase S14 family. As to quaternary structure, component of the chloroplastic Clp protease core complex.

Its subcellular location is the plastid. It is found in the chloroplast stroma. The enzyme catalyses Hydrolysis of proteins to small peptides in the presence of ATP and magnesium. alpha-casein is the usual test substrate. In the absence of ATP, only oligopeptides shorter than five residues are hydrolyzed (such as succinyl-Leu-Tyr-|-NHMec, and Leu-Tyr-Leu-|-Tyr-Trp, in which cleavage of the -Tyr-|-Leu- and -Tyr-|-Trp bonds also occurs).. Functionally, cleaves peptides in various proteins in a process that requires ATP hydrolysis. Has a chymotrypsin-like activity. Plays a major role in the degradation of misfolded proteins. The protein is ATP-dependent Clp protease proteolytic subunit of Anthoceros angustus (Hornwort).